Consider the following 266-residue polypeptide: Respiratory nitrate reductase beta chain (266 aa).

2 consecutive 4Fe-4S ferredoxin-type domains span residues 3-32 and 30-61; these read VGMV…AWFN and WFNN…KREE. Residues Cys12, Cys15, Cys18, Cys22, Cys39, Cys42, and Cys47 each contribute to the [4Fe-4S] cluster site. Residues Cys51 and Cys73 each contribute to the [3Fe-4S] cluster site. Cys77, Cys81, Cys84, Cys96, and Cys100 together coordinate [4Fe-4S] cluster.

In terms of assembly, heterotrimer composed of an alpha, a beta and a gamma chain. Alpha and beta are catalytic chains; gamma chains are involved in binding the enzyme complex to the cytoplasmic membrane. The cofactor is [4Fe-4S] cluster. Requires [3Fe-4S] cluster as cofactor.

The protein resides in the cell membrane. It localises to the cytoplasm. It carries out the reaction nitrate + a quinol = a quinone + nitrite + H2O. Its activity is regulated as follows. Inhibited by micromolar concentrations of azide. Its function is as follows. The nitrate reductase enzyme complex allows Bradyrhizobium sp. USDA 3045 to use nitrate as an electron acceptor during anaerobic growth. The beta chain is an electron transfer unit containing four cysteine clusters involved in the formation of iron-sulfur centers. Electrons are transferred from the gamma chain to the molybdenum cofactor of the alpha subunit. This is Respiratory nitrate reductase beta chain (narH) from Bradyrhizobium sp.